The primary structure comprises 322 residues: Protease HtpX homolog (322 aa).

2 helical membrane passes run 19-39 and 61-81; these read ILLILFPCLVAVLTYLFCYLL and FINLIPYIIGGVLVWFIIAYF. His165 provides a ligand contact to Zn(2+). Glu166 is an active-site residue. Position 169 (His169) interacts with Zn(2+). Helical transmembrane passes span 175–195 and 216–236; these read VRLLIISIVFVGIFSMLAQIA and ILILVLAMIVAAIGYFFATLM. Position 245 (Glu245) interacts with Zn(2+).

The protein belongs to the peptidase M48B family. The cofactor is Zn(2+).

It localises to the cell inner membrane. The protein is Protease HtpX homolog of Bacteroides fragilis (strain YCH46).